The primary structure comprises 473 residues: MKTDTSTFLAQQIVRLRRRDQIRRLMQRDKTPLAILFMAAVVGTLTGLVGVAFEKAVSWVQNMRIGALVQVADHAFLLWPLAFILSALLAMVGYFLVRKFAPEAGGSGIPEIEGALEELRPVRWWRVLPVKFIGGMGTLGAGMVLGREGPTVQIGGNLGRMVLDVFRMRSAEARHTLLATGAAAGLSAAFNAPLAGILFIIEEMRPQFRYNLISIKAVFTGVIMSSIVFRIFNGEAPIIEVGKLSDAPVNTLWLYLILGIIFGCVGPVFNSLVLRTQDMFQRFHGGEIKKWVLMGGAIGGLCGILGLIEPEAAGGGFNLIPIAAAGNFSVGLLLFIFIARVVTTLLCFSSGAPGGIFAPMLALGTLLGTAFGMAAAVLFPQYHLEAGTFAIAGMGALMAASVRAPLTGIVLVLEMTDNYQLILPMIITCLGATLLAQFLGGKPLYSTILARTLAKQDAEQAAKSQNAPAGENT.

The Cytoplasmic portion of the chain corresponds to 1-32 (MKTDTSTFLAQQIVRLRRRDQIRRLMQRDKTP). A helical transmembrane segment spans residues 33–69 (LAILFMAAVVGTLTGLVGVAFEKAVSWVQNMRIGALV). Topologically, residues 70-76 (QVADHAF) are periplasmic. Residues 77–100 (LLWPLAFILSALLAMVGYFLVRKF) traverse the membrane as a helical segment. Positions 106–110 (GSGIP) match the Selectivity filter part_1 motif. Ser107 serves as a coordination point for chloride. Positions 109–116 (IPEIEGAL) form an intramembrane region, helical. Residues 117-123 (EELRPVR) are Cytoplasmic-facing. Helical transmembrane passes span 124–141 (WWRV…TLGA) and 148–166 (EGPT…LDVF). The Selectivity filter part_2 motif lies at 146–150 (GREGP). Topologically, residues 167-176 (RMRSAEARHT) are cytoplasmic. Intramembrane regions (helical) lie at residues 177–189 (LLAT…LSAA) and 193–201 (PLAGILFII). The Cytoplasmic portion of the chain corresponds to 202–214 (EEMRPQFRYNLIS). A helical transmembrane segment spans residues 215–232 (IKAVFTGVIMSSIVFRIF). Topologically, residues 233 to 252 (NGEAPIIEVGKLSDAPVNTL) are periplasmic. A helical membrane pass occupies residues 253–281 (WLYLILGIIFGCVGPVFNSLVLRTQDMFQ). Residues 282–287 (RFHGGE) lie on the Cytoplasmic side of the membrane. A helical membrane pass occupies residues 288–309 (IKKWVLMGGAIGGLCGILGLIE). The Periplasmic segment spans residues 310–329 (PEAAGGGFNLIPIAAAGNFS). The next 2 helical transmembrane spans lie at 330–349 (VGLL…LCFS) and 355–376 (GIFA…MAAA). The Selectivity filter part_3 signature appears at 355–359 (GIFAP). 2 residues coordinate chloride: Ile356 and Phe357. At 377 to 386 (VLFPQYHLEA) the chain is on the periplasmic side. The segment at residues 387-401 (GTFAIAGMGALMAAS) is an intramembrane region (helical). The segment at residues 402-404 (VRA) is an intramembrane region (note=Loop between two helices). An intramembrane region (helical) is located at residues 405-416 (PLTGIVLVLEMT). The note=Loop between two helices intramembrane region spans 417-421 (DNYQL). A helical transmembrane segment spans residues 422–438 (ILPMIITCLGATLLAQF). Residues 439-473 (LGGKPLYSTILARTLAKQDAEQAAKSQNAPAGENT) lie on the Cytoplasmic side of the membrane. Chloride is bound at residue Tyr445.

It belongs to the chloride channel (TC 2.A.49) family. ClcA subfamily. As to quaternary structure, homodimer.

The protein resides in the cell inner membrane. It catalyses the reaction 2 chloride(in) + H(+)(out) = 2 chloride(out) + H(+)(in). Functionally, proton-coupled chloride transporter. Functions as antiport system and exchanges two chloride ions for 1 proton. Probably acts as an electrical shunt for an outwardly-directed proton pump that is linked to amino acid decarboxylation, as part of the extreme acid resistance (XAR) response. The chain is H(+)/Cl(-) exchange transporter ClcA from Salmonella gallinarum (strain 287/91 / NCTC 13346).